A 261-amino-acid chain; its full sequence is 3-methyl-2-oxobutanoate hydroxymethyltransferase (261 aa).

2 residues coordinate Mg(2+): D42 and D81. 3-methyl-2-oxobutanoate-binding positions include D42–S43, D81, and K110. E112 lines the Mg(2+) pocket. E179 serves as the catalytic Proton acceptor.

The protein belongs to the PanB family. In terms of assembly, homodecamer; pentamer of dimers. Mg(2+) serves as cofactor.

It localises to the cytoplasm. It catalyses the reaction 3-methyl-2-oxobutanoate + (6R)-5,10-methylene-5,6,7,8-tetrahydrofolate + H2O = 2-dehydropantoate + (6S)-5,6,7,8-tetrahydrofolate. Its pathway is cofactor biosynthesis; (R)-pantothenate biosynthesis; (R)-pantoate from 3-methyl-2-oxobutanoate: step 1/2. Functionally, catalyzes the reversible reaction in which hydroxymethyl group from 5,10-methylenetetrahydrofolate is transferred onto alpha-ketoisovalerate to form ketopantoate. This Thermus thermophilus (strain ATCC BAA-163 / DSM 7039 / HB27) protein is 3-methyl-2-oxobutanoate hydroxymethyltransferase.